The chain runs to 295 residues: Pyridoxal 5'-phosphate synthase subunit PdxS (295 aa).

Asp-25 provides a ligand contact to D-ribose 5-phosphate. Lys-82 (schiff-base intermediate with D-ribose 5-phosphate) is an active-site residue. Position 154 (Gly-154) interacts with D-ribose 5-phosphate. Residue Arg-166 participates in D-glyceraldehyde 3-phosphate binding. Residues Gly-215 and 236–237 (GS) contribute to the D-ribose 5-phosphate site.

It belongs to the PdxS/SNZ family. As to quaternary structure, in the presence of PdxT, forms a dodecamer of heterodimers.

The catalysed reaction is aldehydo-D-ribose 5-phosphate + D-glyceraldehyde 3-phosphate + L-glutamine = pyridoxal 5'-phosphate + L-glutamate + phosphate + 3 H2O + H(+). The protein operates within cofactor biosynthesis; pyridoxal 5'-phosphate biosynthesis. Its function is as follows. Catalyzes the formation of pyridoxal 5'-phosphate from ribose 5-phosphate (RBP), glyceraldehyde 3-phosphate (G3P) and ammonia. The ammonia is provided by the PdxT subunit. Can also use ribulose 5-phosphate and dihydroxyacetone phosphate as substrates, resulting from enzyme-catalyzed isomerization of RBP and G3P, respectively. This chain is Pyridoxal 5'-phosphate synthase subunit PdxS, found in Natranaerobius thermophilus (strain ATCC BAA-1301 / DSM 18059 / JW/NM-WN-LF).